Here is a 253-residue protein sequence, read N- to C-terminus: PAXIP1-associated glutamate-rich protein 1A (253 aa).

Disordered regions lie at residues 1–108 and 126–253; these read MSLA…MPPP and LQAE…QRKY. Residues 45-66 are compositionally biased toward basic and acidic residues; that stretch reads KAEEEGKGSQEEAGREGSRPEE. The tract at residues 115 to 159 is sufficient for interaction with NCOA1; it reads YELLATQGTLELQAEILPRRPPTPEAQSEEERSDEEPEAKEEEEE. Position 137 is a phosphothreonine (threonine 137). The span at 141-158 shows a compositional bias: acidic residues; sequence QSEEERSDEEPEAKEEEE. Phosphoserine is present on residues serine 142 and serine 147. The interval 160 to 253 is sufficient for interaction with ESR1; it reads KPHMPTEFDF…NSLFPRQRKY (94 aa). Basic and acidic residues predominate over residues 194–222; sequence QKREARLDKVLSDMKRHKKLEEQILRTGR. Phosphoserine is present on serine 236. Over residues 238-247 the composition is skewed to polar residues; the sequence is PLRSSGNSLF.

As to quaternary structure, component of the KMT2 family MLL2/MLL3 complex, at least composed of the histone methyltransferases KMT2D and/or KMT2C, the common subunits ASH2L, RBBP5, WDR5 and DPY30, and the complex type-specific subunits PAXIP1/PTIP, PAGR1, NCOA6 and KDM6A; PAXIP1 is required for the association with the MLL2/MLL3 complex. Forms a constitutive complex with PAXIP1/PTIP independently of the MLL2/MLL3 complex. Interacts with NCOA1, ESR1, NR3C1, AR.

It localises to the nucleus. Its function is as follows. Its association with the histone methyltransferase MLL2/MLL3 complex is suggesting a role in epigenetic transcriptional activation. However, in association with PAXIP1/PTIP is proposed to function at least in part independently of the MLL2/MLL3 complex. Proposed to be recruited by PAXIP1 to sites of DNA damage where the PAGR1:PAXIP1 complex is required for cell survival in response to DNA damage independently of the MLL2/MLL3 complex. However, its function in DNA damage has been questioned. During immunoglobulin class switching in activated B-cells is involved in transcription regulation of downstream switch regions at the immunoglobulin heavy-chain (Igh) locus independently of the MLL2/MLL3 complex. Involved in both estrogen receptor-regulated gene transcription and estrogen-stimulated G1/S cell-cycle transition. Acts as a transcriptional cofactor for nuclear hormone receptors. Inhibits the induction properties of several steroid receptors such as NR3C1, AR and PPARG; the mechanism of inhibition appears to be gene-dependent. May be involved in the regulation of the BMP pathway in extraembryonic development. This Mus musculus (Mouse) protein is PAXIP1-associated glutamate-rich protein 1A.